Here is a 729-residue protein sequence, read N- to C-terminus: Golgin subfamily A member 5 (729 aa).

N-acetylserine is present on S2. At S2–R696 the chain is on the cytoplasmic side. Dimethylated arginine is present on residues R27 and R89. Disordered stretches follow at residues R89–L222 and S626–G645. At S116 the chain carries Phosphoserine. Positions P134 to R146 are enriched in basic and acidic residues. A compositionally biased stretch (low complexity) spans P148–T167. 2 stretches are compositionally biased toward polar residues: residues G175–S186 and S626–N638. A coiled-coil region spans residues G215 to S629. The helical; Anchor for type IV membrane protein transmembrane segment at V697–Y717 threads the bilayer. The Lumenal portion of the chain corresponds to S718–K729.

As to quaternary structure, homodimer. Interacts with RAB1A that has been activated by GTP-binding. Interacts with isoform CASP of CUX1. In terms of processing, highly phosphorylated during mitosis. Phosphorylation is barely detectable during interphase.

The protein localises to the golgi apparatus membrane. In terms of biological role, involved in maintaining Golgi structure. Stimulates the formation of Golgi stacks and ribbons. Involved in intra-Golgi retrograde transport. This is Golgin subfamily A member 5 (Golga5) from Mus musculus (Mouse).